A 610-amino-acid chain; its full sequence is GATOR complex protein NPRL3 (610 aa).

Ser-437 carries the phosphoserine modification. The disordered stretch occupies residues 474–501 (REASEDHSSLASDNIAVQPSSSHKSNFS). A compositionally biased stretch (polar residues) spans 482-501 (SLASDNIAVQPSSSHKSNFS).

It belongs to the NPR3 family. As to quaternary structure, component of the GATOR complex consisting of mio, Nup44A/Seh1, Im11, Nplr3, Nplr2, Wdr24, Wdr59 and Sec13. Within the GATOR complex, probable component of the GATOR1 subcomplex which is likely composed of Iml1, Nplr2 and Nplr3. Interacts with Nprl2.

The protein resides in the cytoplasm. The protein localises to the lysosome. An essential component of the GATOR subcomplex GATOR1 which functions as an inhibitor of the amino acid-sensing branch of the TORC1 signaling pathway. The two GATOR subcomplexes, GATOR1 and GATOR2, regulate the TORC1 pathway in order to mediate metabolic homeostasis, female gametogenesis and the response to amino acid limitation and complete starvation. The function of GATOR1 in negatively regulating the TORC1 pathway is essential for maintaining baseline levels of TORC1 activity under nutrient rich conditions, and for promoting survival during amino acid or complete starvation by inhibiting TORC1-dependent cell growth and promoting catabolic metabolism and autophagy. In addition, this inhibition of TORC1 is necessary to maintain female fertility under normal conditions and during periods of nutrient stress. GATOR1 and GATOR2 act at different stages of oogenesis to regulate TORC1 in order to control meiotic entry and promote oocyte growth and development. After exactly four mitotic cyst divisions, the GATOR1 complex members (Iml1, Nprl2 and Nprl3) down-regulate TORC1 to slow cellular metabolism and promote the mitotic/meiotic transition. At later stages of oogenesis, the mio and Nup44A components of the GATOR2 complex inhibit GATOR1 and thus activate TORC1 to promote meiotic progression, and drive oocyte growth and development. This chain is GATOR complex protein NPRL3, found in Drosophila melanogaster (Fruit fly).